A 428-amino-acid chain; its full sequence is Light-independent protochlorophyllide reductase subunit N (428 aa).

3 residues coordinate [4Fe-4S] cluster: Cys-31, Cys-56, and Cys-117.

Belongs to the BchN/ChlN family. As to quaternary structure, protochlorophyllide reductase is composed of three subunits; BchL, BchN and BchB. Forms a heterotetramer of two BchB and two BchN subunits. [4Fe-4S] cluster serves as cofactor.

It catalyses the reaction chlorophyllide a + oxidized 2[4Fe-4S]-[ferredoxin] + 2 ADP + 2 phosphate = protochlorophyllide a + reduced 2[4Fe-4S]-[ferredoxin] + 2 ATP + 2 H2O. Its pathway is porphyrin-containing compound metabolism; bacteriochlorophyll biosynthesis (light-independent). Its function is as follows. Component of the dark-operative protochlorophyllide reductase (DPOR) that uses Mg-ATP and reduced ferredoxin to reduce ring D of protochlorophyllide (Pchlide) to form chlorophyllide a (Chlide). This reaction is light-independent. The NB-protein (BchN-BchB) is the catalytic component of the complex. The chain is Light-independent protochlorophyllide reductase subunit N from Rhodopseudomonas palustris (strain BisB5).